The chain runs to 205 residues: Guanylate kinase (205 aa).

The 179-residue stretch at 7 to 185 (GNIFIISAAS…AEEDLRHIVN (179 aa)) folds into the Guanylate kinase-like domain. ATP is bound at residue 14–21 (AASGTGKT).

It belongs to the guanylate kinase family.

The protein resides in the cytoplasm. It catalyses the reaction GMP + ATP = GDP + ADP. Functionally, essential for recycling GMP and indirectly, cGMP. The sequence is that of Guanylate kinase (gmk) from Neisseria meningitidis serogroup A / serotype 4A (strain DSM 15465 / Z2491).